Consider the following 323-residue polypeptide: Methenyltetrahydromethanopterin cyclohydrolase (323 aa).

It belongs to the MCH family.

The protein localises to the cytoplasm. The catalysed reaction is 5,10-methenyl-5,6,7,8-tetrahydromethanopterin + H2O = N(5)-formyl-5,6,7,8-tetrahydromethanopterin + H(+). It functions in the pathway one-carbon metabolism; methanogenesis from CO(2); 5,10-methenyl-5,6,7,8-tetrahydromethanopterin from CO(2): step 3/3. Its function is as follows. Catalyzes the reversible interconversion of 5-formyl-H(4)MPT to methenyl-H(4)MPT(+). In Methanobrevibacter smithii (strain ATCC 35061 / DSM 861 / OCM 144 / PS), this protein is Methenyltetrahydromethanopterin cyclohydrolase.